Consider the following 315-residue polypeptide: MAAEISISASSRAICLQRNPFPAPKYFATAPPLLFFSPLTCNLDAILRSRRKPRLAACFVLKDDKLYTAQSGKQSDTEAIGDEIEVETNEEKSLAVRLAEKFARKKSERFTYLVAAVMSSLGITSMAVISVYYRFSWQMEGGEMPFSEMFCTFALAFGAAIGMEYWARWAHRALWHASLWHMHESHHRPREGPFELNDIFAIINAVPAIALLSFGFNHKGLIPGLCFGAGLGITVFGMAYMFVHDGLVHKRFPVGPIANVPYFQRVAAAHQLHHSDKFDGVPYGLFLGPKELEEVGVLEELEKEVNRRIKSSKRL.

Residues 1–58 constitute a chloroplast transit peptide; that stretch reads MAAEISISASSRAICLQRNPFPAPKYFATAPPLLFFSPLTCNLDAILRSRRKPRLAAC. The next 2 membrane-spanning stretches (helical) occupy residues 112 to 132 and 146 to 166; these read YLVA…ISVY and FSEM…MEYW. Residues 159-286 form the Fatty acid hydroxylase domain; the sequence is AAIGMEYWAR…KFDGVPYGLF (128 aa). The short motif at 171–176 is the Histidine box-1 element; it reads HRALWH. The Histidine box-2 signature appears at 183–187; sequence HESHH. 2 helical membrane-spanning segments follow: residues 196 to 216 and 222 to 242; these read LNDI…SFGF and IPGL…AYMF. The short motif at 244 to 249 is the Histidine box-3 element; sequence HDGLVH. A Histidine box-4 motif is present at residues 270–274; sequence HQLHH.

This sequence belongs to the sterol desaturase family.

It localises to the plastid. It is found in the chloroplast membrane. The catalysed reaction is all-trans-beta-carotene + 4 reduced [2Fe-2S]-[ferredoxin] + 2 O2 + 4 H(+) = all-trans-zeaxanthin + 4 oxidized [2Fe-2S]-[ferredoxin] + 2 H2O. The enzyme catalyses all-trans-beta-carotene + 2 reduced [2Fe-2S]-[ferredoxin] + O2 + 2 H(+) = beta-cryptoxanthin + 2 oxidized [2Fe-2S]-[ferredoxin] + H2O. It catalyses the reaction beta-cryptoxanthin + 2 reduced [2Fe-2S]-[ferredoxin] + O2 + 2 H(+) = all-trans-zeaxanthin + 2 oxidized [2Fe-2S]-[ferredoxin] + H2O. Its activity is regulated as follows. Inhibited by o-phenanthroline and 8-hydroxyquinoline. In terms of biological role, nonheme diiron monooxygenase involved in the biosynthesis of xanthophylls. Specific for beta-ring hydroxylations of beta-carotene. Produces beta-cryptoxanthin and zeaxanthin. Uses ferredoxin as an electron donor. This is Beta-carotene hydroxylase 1, chloroplastic from Capsicum annuum (Capsicum pepper).